The chain runs to 101 residues: Small ribosomal subunit protein uS14 (101 aa).

Belongs to the universal ribosomal protein uS14 family. In terms of assembly, part of the 30S ribosomal subunit. Contacts proteins S3 and S10.

Its function is as follows. Binds 16S rRNA, required for the assembly of 30S particles and may also be responsible for determining the conformation of the 16S rRNA at the A site. This chain is Small ribosomal subunit protein uS14, found in Chlamydia muridarum (strain MoPn / Nigg).